We begin with the raw amino-acid sequence, 958 residues long: Atromentin synthetase greA (958 aa).

Positions 60–465 (SIQTKTFSAF…SGRIKDTVIV (406 aa)) are adenylation (A) domain. In terms of domain architecture, Carrier spans 597–675 (APSTETEKAL…SLANYVNALL (79 aa)). The segment at 602–672 (TEKALAKIYA…VVSSLANYVN (71 aa)) is thiolation and peptide carrier (T) domain. Serine 634 is modified (O-(pantetheine 4'-phosphoryl)serine). The tract at residues 698–946 (PIFFVHPGVG…MDFDHVPQFQ (249 aa)) is thioesterase (TE) domain.

The protein belongs to the ATP-dependent AMP-binding enzyme family.

It participates in secondary metabolite biosynthesis. Functionally, an L-tyrosine:2-oxoglutarate aminotransferase and atromentin synthetase greA catalyze consecutive steps to turn over L-tyrosine into atromentin, which represents the generic precursor molecule for the entire terphenylquinone and pulvinic acid family of pigments, which are widely distributed secondary metabolites in homobasidiomycetes. The first step catalyzed by the aminotransferase converts L-tyrosine in to 4-hydroxyphenylpyruvate (4-HPP). Adenylation of two 4-HPP monomers by the greA adenylation (A) domain, covalent tethering of the monomers as a thioester and oxoester onto the greA thiolation (T) and thioesterase (TE) domains, respectively, and symmetric C-C-bond formation between two monomers catalyzed by the greA TE domain leads to atromentin. In Suillus grevillei (Larch bolete), this protein is Atromentin synthetase greA (greA).